The primary structure comprises 346 residues: Phosphoribosylformylglycinamidine cyclo-ligase (346 aa).

It belongs to the AIR synthase family.

The protein localises to the cytoplasm. The catalysed reaction is 2-formamido-N(1)-(5-O-phospho-beta-D-ribosyl)acetamidine + ATP = 5-amino-1-(5-phospho-beta-D-ribosyl)imidazole + ADP + phosphate + H(+). It functions in the pathway purine metabolism; IMP biosynthesis via de novo pathway; 5-amino-1-(5-phospho-D-ribosyl)imidazole from N(2)-formyl-N(1)-(5-phospho-D-ribosyl)glycinamide: step 2/2. In Vibrio campbellii (strain ATCC BAA-1116), this protein is Phosphoribosylformylglycinamidine cyclo-ligase.